The sequence spans 180 residues: Mitochondrial membrane protein FMP33 (180 aa).

Transmembrane regions (helical) follow at residues 34 to 54 (LYTSLLVTTLYGTGLACLYLE), 121 to 141 (FSIVWGFLIQLSSLIGNSTLG), and 145 to 165 (ILYKGSVVSVLGFPPLIYMAL).

It is found in the mitochondrion membrane. This Saccharomyces cerevisiae (strain ATCC 204508 / S288c) (Baker's yeast) protein is Mitochondrial membrane protein FMP33 (FMP33).